Reading from the N-terminus, the 326-residue chain is Vitamin B12 import system permease protein BtuC (326 aa).

The next 9 helical transmembrane spans lie at 17-39 (LSLSLLVLLATLLSLCAGEQWIA), 59-81 (RTLAVLLVGAALALSGAVMQALF), 88-107 (PGLLGVSNGAGVGLIAAVLL), 111-133 (QLAGWALGLCAIAGALIITLILL), 146-168 (LLAGVALGIICSALMTWAIYFST), 188-205 (WQQSWLMIALIPVLIWIC), 242-264 (MVGVSVAMAGAIGFIGLVIPHIL), 274-296 (VLLPGCALAGAIALLLADVVARL), and 303-322 (LPIGVVTATLGAPVFIWLLL).

It belongs to the binding-protein-dependent transport system permease family. FecCD subfamily. The complex is composed of two ATP-binding proteins (BtuD), two transmembrane proteins (BtuC) and a solute-binding protein (BtuF).

Its subcellular location is the cell inner membrane. Part of the ABC transporter complex BtuCDF involved in vitamin B12 import. Involved in the translocation of the substrate across the membrane. The polypeptide is Vitamin B12 import system permease protein BtuC (Salmonella paratyphi A (strain ATCC 9150 / SARB42)).